Reading from the N-terminus, the 1621-residue chain is ALK tyrosine kinase receptor (1621 aa).

Residues methionine 1–alanine 18 form the signal peptide. Residues serine 19 to serine 1042 are Extracellular-facing. The segment at arginine 48–aspartate 70 is heparin-binding region. N-linked (GlcNAc...) asparagine glycans are attached at residues asparagine 174, asparagine 248, asparagine 289, asparagine 328, asparagine 415, asparagine 428, asparagine 449, asparagine 567, asparagine 575, asparagine 631, and asparagine 673. Residues leucine 268–glutamate 431 enclose the MAM 1 domain. The region spanning leucine 441–lysine 477 is the LDL-receptor class A domain. The region spanning phenylalanine 482–leucine 640 is the MAM 2 domain. Cysteine 692 and cysteine 705 form a disulfide bridge. An N-linked (GlcNAc...) asparagine glycan is attached at asparagine 713. Cysteines 787 and 798 form a disulfide. Asparagine 812, asparagine 868, and asparagine 890 each carry an N-linked (GlcNAc...) asparagine glycan. An intrachain disulfide couples cysteine 910 to cysteine 932. N-linked (GlcNAc...) asparagine glycosylation occurs at asparagine 990. Intrachain disulfides connect cysteine 991-cysteine 999, cysteine 994-cysteine 1010, and cysteine 1012-cysteine 1025. The tract at residues cysteine 991–proline 1029 is EGF-like. The chain crosses the membrane as a helical span at residues valine 1043–tyrosine 1063. Topologically, residues arginine 1064 to proline 1621 are cytoplasmic. Tyrosine 1082, tyrosine 1096, and tyrosine 1100 each carry phosphotyrosine. The 277-residue stretch at isoleucine 1120–valine 1396 folds into the Protein kinase domain. ATP contacts are provided by residues leucine 1126 to valine 1134 and histidine 1128. Tyrosine 1135 is subject to Phosphotyrosine. ATP is bound by residues lysine 1154 and glutamate 1201–methionine 1203. The active-site Proton acceptor is aspartate 1253. Aspartate 1274 is an ATP binding site. Phosphotyrosine is present on tyrosine 1282. The interval glutamate 1412–arginine 1556 is disordered. The segment covering lysine 1414–glutamate 1423 has biased composition (basic and acidic residues). Positions serine 1441–glycine 1461 are enriched in low complexity. The span at alanine 1462 to alanine 1472 shows a compositional bias: gly residues. Residues asparagine 1506–serine 1518 are compositionally biased toward polar residues. Position 1516 is a phosphotyrosine (tyrosine 1516). The span at alanine 1543–alanine 1552 shows a compositional bias: gly residues.

This sequence belongs to the protein kinase superfamily. Tyr protein kinase family. Insulin receptor subfamily. Homodimer; homodimerizes following heparin- and ligand-binding. Interacts with CBL, IRS1, PIK3R1 and PLCG1. Interacts with FRS2 and SHC1. Interacts with PTN and MDK. In terms of processing, phosphorylated at tyrosine residues by autocatalysis, which activates kinase activity. In cells not stimulated by a ligand, receptor protein tyrosine phosphatase beta and zeta complex (PTPRB/PTPRZ1) dephosphorylates ALK at the sites in ALK that are undergoing autophosphorylation through autoactivation. As to expression, mainly expressed in central nervous system (CNS) and other parts of the brain such as the paraventricular nucleus (PVN) of the hypothalamus. Expression is also found in peripheral nervous systems, eye, nasal epithelium, olfactory nerve, tongue, skin, tissue surrounding the esophagus, stomach, midgut, as well as testis and ovary.

The protein resides in the cell membrane. The catalysed reaction is L-tyrosyl-[protein] + ATP = O-phospho-L-tyrosyl-[protein] + ADP + H(+). Its activity is regulated as follows. Activated upon ALKAL2 ligand-binding. ALKAL2-driven activation is coupled with heparin-binding. Following ligand-binding, homodimerizes and autophosphorylates, activating its kinase activity. Inactivated through dephosphorylation by receptor protein tyrosine phosphatase beta and zeta complex (PTPRB/PTPRZ1) when there is no stimulation by a ligand. Its function is as follows. Neuronal receptor tyrosine kinase that is essentially and transiently expressed in specific regions of the central and peripheral nervous systems and plays an important role in the genesis and differentiation of the nervous system. Also acts as a key thinness protein involved in the resistance to weight gain: in hypothalamic neurons, controls energy expenditure acting as a negative regulator of white adipose tissue lipolysis and sympathetic tone to fine-tune energy homeostasis. Following activation by ALKAL2 ligand at the cell surface, transduces an extracellular signal into an intracellular response. In contrast, ALKAL1 is not a potent physiological ligand for ALK. Ligand-binding to the extracellular domain induces tyrosine kinase activation, leading to activation of the mitogen-activated protein kinase (MAPK) pathway. Phosphorylates almost exclusively at the first tyrosine of the Y-x-x-x-Y-Y motif. Induces tyrosine phosphorylation of CBL, FRS2, IRS1 and SHC1, as well as of the MAP kinases MAPK1/ERK2 and MAPK3/ERK1. ALK activation may also be regulated by pleiotrophin (PTN) and midkine (MDK). PTN-binding induces MAPK pathway activation, which is important for the anti-apoptotic signaling of PTN and regulation of cell proliferation. MDK-binding induces phosphorylation of the ALK target insulin receptor substrate (IRS1), activates mitogen-activated protein kinases (MAPKs) and PI3-kinase, resulting also in cell proliferation induction. Drives NF-kappa-B activation, probably through IRS1 and the activation of the AKT serine/threonine kinase. Recruitment of IRS1 to activated ALK and the activation of NF-kappa-B are essential for the autocrine growth and survival signaling of MDK. In Mus musculus (Mouse), this protein is ALK tyrosine kinase receptor.